The primary structure comprises 78 residues: DNA-directed RNA polymerase subunit Rpo5 (78 aa).

The protein belongs to the archaeal Rpo5/eukaryotic RPB5 RNA polymerase subunit family. In terms of assembly, part of the RNA polymerase complex.

The protein resides in the cytoplasm. The catalysed reaction is RNA(n) + a ribonucleoside 5'-triphosphate = RNA(n+1) + diphosphate. Functionally, DNA-dependent RNA polymerase (RNAP) catalyzes the transcription of DNA into RNA using the four ribonucleoside triphosphates as substrates. In Methanocaldococcus jannaschii (strain ATCC 43067 / DSM 2661 / JAL-1 / JCM 10045 / NBRC 100440) (Methanococcus jannaschii), this protein is DNA-directed RNA polymerase subunit Rpo5.